The sequence spans 2531 residues: Putative neurobeachin homolog (2531 aa).

3 stretches are compositionally biased toward acidic residues: residues 1-10 (MDISETEYND), 26-35 (EDEVNDEESN), and 62-74 (EPSDDQQNVEESE). 4 disordered regions span residues 1-101 (MDIS…SPPP), 1363-1398 (NDGDHASIKNGSDHSENGADEETEEKGEQGQGDNGG), 1420-1440 (EELKKMHQSNGRRPSTLMPPQ), and 1642-1670 (RFVPNPYGSRHEEANLPEGEKNEEPEISE). Over residues 1363-1379 (NDGDHASIKNGSDHSEN) the composition is skewed to basic and acidic residues. Residues 1427–1440 (QSNGRRPSTLMPPQ) are compositionally biased toward polar residues. Residues 1650–1670 (SRHEEANLPEGEKNEEPEISE) show a composition bias toward basic and acidic residues. The BEACH-type PH domain occupies 1714–1822 (PSSQSACFST…TVRKVVYQLP (109 aa)). Residues 1841 to 2130 (MTPRQLFKHS…QLLAEAHPPR (290 aa)) enclose the BEACH domain. WD repeat units follow at residues 2289-2332 (GHGD…GFIA), 2350-2389 (GHEASISALCVSAEHGLVVSGCEDGVILIHTTASDLLRRI), 2429-2468 (LSEEKIECVTVTRDGEFAVTGAVNGRITIWRMFPLNKLYT), and 2471-2510 (PLNSAVRSVAVVASHRFILGGLDSGAIVVFNADFNRWHYE).

It belongs to the WD repeat neurobeachin family. Interacts with RII subunit of PKA.

Its subcellular location is the cytoplasm. It localises to the membrane. The protein localises to the nucleus. Its function is as follows. Binds to type II regulatory subunits of protein kinase A and anchors/targets them to the membrane. May anchor the kinase to cytoskeletal and/or organelle-associated proteins. Regulates endosomal traffic in polarized epithelial cells such as the vulval precursor cells and intestinal cells. Thought to act as a negative regulator of lin-12 activity in vulval precursor cells. May have a role in the internalization process from basolateral surface of polarized epithelial cells. The polypeptide is Putative neurobeachin homolog (Caenorhabditis briggsae).